We begin with the raw amino-acid sequence, 264 residues long: S-adenosylmethionine decarboxylase proenzyme (264 aa).

The active-site Schiff-base intermediate with substrate; via pyruvic acid is S112. Position 112 is a pyruvic acid (Ser); by autocatalysis (S112). The active-site Proton acceptor; for processing activity is H117. The active-site Proton donor; for catalytic activity is C140.

Belongs to the prokaryotic AdoMetDC family. Type 2 subfamily. As to quaternary structure, heterooctamer of four alpha and four beta chains arranged as a tetramer of alpha/beta heterodimers. It depends on pyruvate as a cofactor. In terms of processing, is synthesized initially as an inactive proenzyme. Formation of the active enzyme involves a self-maturation process in which the active site pyruvoyl group is generated from an internal serine residue via an autocatalytic post-translational modification. Two non-identical subunits are generated from the proenzyme in this reaction, and the pyruvate is formed at the N-terminus of the alpha chain, which is derived from the carboxyl end of the proenzyme. The post-translation cleavage follows an unusual pathway, termed non-hydrolytic serinolysis, in which the side chain hydroxyl group of the serine supplies its oxygen atom to form the C-terminus of the beta chain, while the remainder of the serine residue undergoes an oxidative deamination to produce ammonia and the pyruvoyl group blocking the N-terminus of the alpha chain.

It catalyses the reaction S-adenosyl-L-methionine + H(+) = S-adenosyl 3-(methylsulfanyl)propylamine + CO2. The protein operates within amine and polyamine biosynthesis; S-adenosylmethioninamine biosynthesis; S-adenosylmethioninamine from S-adenosyl-L-methionine: step 1/1. Functionally, catalyzes the decarboxylation of S-adenosylmethionine to S-adenosylmethioninamine (dcAdoMet), the propylamine donor required for the synthesis of the polyamines spermine and spermidine from the diamine putrescine. The protein is S-adenosylmethionine decarboxylase proenzyme of Salmonella dublin (strain CT_02021853).